The sequence spans 609 residues: Threonine--tRNA ligase (609 aa).

Positions 1-143 are editing domain; the sequence is MRVLYIHAER…SFKPEGAKVE (143 aa). 2 catalytic regions span residues 195 to 491 and 196 to 491; these read PRYL…PRLP and RYLD…PRLP. C288, H339, and H460 together coordinate Zn(2+).

This sequence belongs to the class-II aminoacyl-tRNA synthetase family. As to quaternary structure, homodimer. Zn(2+) is required as a cofactor.

The protein resides in the cytoplasm. It catalyses the reaction tRNA(Thr) + L-threonine + ATP = L-threonyl-tRNA(Thr) + AMP + diphosphate + H(+). Functionally, catalyzes the attachment of threonine to tRNA(Thr) in a two-step reaction: L-threonine is first activated by ATP to form Thr-AMP and then transferred to the acceptor end of tRNA(Thr). Also edits incorrectly charged L-seryl-tRNA(Thr). The chain is Threonine--tRNA ligase from Pyrobaculum islandicum (strain DSM 4184 / JCM 9189 / GEO3).